The following is a 404-amino-acid chain: Glycosylated lysosomal membrane protein B (404 aa).

An N-terminal signal peptide occupies residues 1 to 24 (MSCTRGWRLILLGLLCVGLLGTRG). Residues 25 to 364 (QDESRKVSVQ…YGDPPRDSFS (340 aa)) lie on the Lumenal side of the membrane. 15 N-linked (GlcNAc...) asparagine glycosylation sites follow: N85, N124, N128, N142, N152, N156, N163, N168, N178, N189, N205, N221, N266, N303, and N330. The helical transmembrane segment at 365-385 (ILVICIMAVALGTPLLLLIIG) threads the bilayer. The Cytoplasmic segment spans residues 386-404 (TVLVTAVRHKVYPNYQPIN). The short motif at 400–404 (YQPIN) is the Lysosomal targeting motif element.

The protein belongs to the GLMP family. As to quaternary structure, interacts (via lumenal domain) with lysosomal protein MFSD1; the interaction starts while both proteins are still in the endoplasmic reticulum and is required for stabilization of MFSD1 in lysosomes but has no direct effect on its targeting to lysosomes or transporter activity.

Its subcellular location is the lysosome membrane. Functionally, required to protect lysosomal transporter MFSD1 from lysosomal proteolysis and for MFSD1 lysosomal localization. The chain is Glycosylated lysosomal membrane protein B (glmp-b) from Xenopus laevis (African clawed frog).